A 293-amino-acid chain; its full sequence is Nucleotide-binding protein BcerKBAB4_4948 (293 aa).

14 to 21 serves as a coordination point for ATP; sequence GMSGAGKT. GTP is bound at residue 65-68; sequence DLRG.

It belongs to the RapZ-like family.

Functionally, displays ATPase and GTPase activities. This is Nucleotide-binding protein BcerKBAB4_4948 from Bacillus mycoides (strain KBAB4) (Bacillus weihenstephanensis).